The sequence spans 151 residues: Large ribosomal subunit protein eL19 (151 aa).

Basic residues predominate over residues 57-81; that stretch reads KKGISSARVKKLKEQRKKGRRRGPG. A disordered region spans residues 57–95; that stretch reads KKGISSARVKKLKEQRKKGRRRGPGSRRGAAGARTPPKE.

This sequence belongs to the eukaryotic ribosomal protein eL19 family. Part of the 50S ribosomal subunit.

Its function is as follows. Binds to the 23S rRNA. The sequence is that of Large ribosomal subunit protein eL19 from Methanocaldococcus jannaschii (strain ATCC 43067 / DSM 2661 / JAL-1 / JCM 10045 / NBRC 100440) (Methanococcus jannaschii).